The following is a 241-amino-acid chain: UDP-2,3-diacylglucosamine hydrolase (241 aa).

Aspartate 8, histidine 10, aspartate 41, asparagine 79, and histidine 114 together coordinate Mn(2+). 79 to 80 (NR) contacts substrate. The substrate site is built by aspartate 122, lysine 164, lysine 167, and histidine 195. Residues histidine 195 and histidine 197 each coordinate Mn(2+).

This sequence belongs to the LpxH family. The cofactor is Mn(2+).

The protein localises to the cell inner membrane. The catalysed reaction is UDP-2-N,3-O-bis[(3R)-3-hydroxytetradecanoyl]-alpha-D-glucosamine + H2O = 2-N,3-O-bis[(3R)-3-hydroxytetradecanoyl]-alpha-D-glucosaminyl 1-phosphate + UMP + 2 H(+). It functions in the pathway glycolipid biosynthesis; lipid IV(A) biosynthesis; lipid IV(A) from (3R)-3-hydroxytetradecanoyl-[acyl-carrier-protein] and UDP-N-acetyl-alpha-D-glucosamine: step 4/6. In terms of biological role, hydrolyzes the pyrophosphate bond of UDP-2,3-diacylglucosamine to yield 2,3-diacylglucosamine 1-phosphate (lipid X) and UMP by catalyzing the attack of water at the alpha-P atom. Involved in the biosynthesis of lipid A, a phosphorylated glycolipid that anchors the lipopolysaccharide to the outer membrane of the cell. The protein is UDP-2,3-diacylglucosamine hydrolase of Aliivibrio fischeri (strain MJ11) (Vibrio fischeri).